Reading from the N-terminus, the 184-residue chain is Fe/S biogenesis protein NfuA (184 aa).

[4Fe-4S] cluster contacts are provided by cysteine 142 and cysteine 145.

Belongs to the NfuA family. Homodimer. [4Fe-4S] cluster serves as cofactor.

In terms of biological role, involved in iron-sulfur cluster biogenesis. Binds a 4Fe-4S cluster, can transfer this cluster to apoproteins, and thereby intervenes in the maturation of Fe/S proteins. Could also act as a scaffold/chaperone for damaged Fe/S proteins. This chain is Fe/S biogenesis protein NfuA, found in Wigglesworthia glossinidia brevipalpis.